The following is a 297-amino-acid chain: tRNA dimethylallyltransferase (297 aa).

Residue 8–15 (GATASGKS) participates in ATP binding. Residue 10-15 (TASGKS) participates in substrate binding. Positions 33–36 (DSLS) are interaction with substrate tRNA.

This sequence belongs to the IPP transferase family. Monomer. Requires Mg(2+) as cofactor.

The enzyme catalyses adenosine(37) in tRNA + dimethylallyl diphosphate = N(6)-dimethylallyladenosine(37) in tRNA + diphosphate. Functionally, catalyzes the transfer of a dimethylallyl group onto the adenine at position 37 in tRNAs that read codons beginning with uridine, leading to the formation of N6-(dimethylallyl)adenosine (i(6)A). The polypeptide is tRNA dimethylallyltransferase (Sulfurimonas denitrificans (strain ATCC 33889 / DSM 1251) (Thiomicrospira denitrificans (strain ATCC 33889 / DSM 1251))).